The sequence spans 312 residues: MAEIYLAGGCFWGLEEYFSRISGVLETSVGYANGQVETTNYQLLKETDHAETVQVIYDEKEVSLREILLYYFRVIDPLSINQQGNDRGRQYRTGIYYQDEADLPAIYTVVQEQERMLGRKIAVEVEQLRHYILAEDYHQDYLRKNPSGYCHIDVTDADKPLIDAANYEKPSQEVLKASLSEESYRVTQEAATEAPFTNAYDQTFEEGIYVDITTGEPLFFAKDKFASGCGWPSFSRPISKELIHYYKDLSHGMERIEVRSRSGSAHLGHVFTDGPRELGGLRYCINSASLRFVAKDEMEKAGYGYLLPYLNK.

Positions 1–155 (MAEIYLAGGC…PSGYCHIDVT (155 aa)) are peptide methionine sulfoxide reductase. Cys10 is an active-site residue. A MsrB domain is found at 172 to 295 (QEVLKASLSE…NSASLRFVAK (124 aa)). The active-site Nucleophile is the Cys284.

This sequence in the N-terminal section; belongs to the MsrA Met sulfoxide reductase family. The protein in the C-terminal section; belongs to the MsrB Met sulfoxide reductase family.

The protein resides in the cell membrane. It carries out the reaction L-methionyl-[protein] + [thioredoxin]-disulfide + H2O = L-methionyl-(S)-S-oxide-[protein] + [thioredoxin]-dithiol. The enzyme catalyses [thioredoxin]-disulfide + L-methionine + H2O = L-methionine (S)-S-oxide + [thioredoxin]-dithiol. The catalysed reaction is L-methionyl-[protein] + [thioredoxin]-disulfide + H2O = L-methionyl-(R)-S-oxide-[protein] + [thioredoxin]-dithiol. Its function is as follows. Has an important function as a repair enzyme for proteins that have been inactivated by oxidation. Catalyzes the reversible oxidation-reduction of methionine sulfoxide in proteins to methionine. In Streptococcus pneumoniae serotype 4 (strain ATCC BAA-334 / TIGR4), this protein is Peptide methionine sulfoxide reductase MsrA/MsrB 1 (msrAB1).